We begin with the raw amino-acid sequence, 122 residues long: Small ribosomal subunit protein bS6 (122 aa).

A disordered region spans residues 99-122 (PSPMMKEVAREEAKKAAAQTEQAA).

Belongs to the bacterial ribosomal protein bS6 family.

Functionally, binds together with bS18 to 16S ribosomal RNA. The sequence is that of Small ribosomal subunit protein bS6 from Ralstonia pickettii (strain 12J).